A 479-amino-acid chain; its full sequence is Envelope glycoprotein C homolog (479 aa).

The signal sequence occupies residues 1-22; the sequence is MASLARAMLALLALYAAAIAAA. Over 23–451 the chain is Virion surface; that stretch reads PSTTTALDTT…SVSWPVVSSM (429 aa). Residues 26–96 are disordered; sequence TTALDTTPNG…RVHGDKATAH (71 aa). The N-linked (GlcNAc...) asparagine; by host glycan is linked to N40. The segment covering 48 to 57 has biased composition (pro residues); sequence PSPPPTPAPA. Positions 75-82 are HDB1; the sequence is SRRKPPRN. The span at 75–87 shows a compositional bias: basic residues; sequence SRRKPPRNNNRTR. N-linked (GlcNAc...) asparagine; by host glycosylation is present at N84. Residues 95–101 are HDB2; sequence AHGRKRI. The cysteines at positions 103 and 120 are disulfide-linked. The HDB3 stretch occupies residues 135–140; that stretch reads YRRGRF. Residues N169, N192, N220, N228, N285, and N302 are each glycosylated (N-linked (GlcNAc...) asparagine; by host). Disulfide bonds link C256-C326, C365-C418, and C369-C392. Residues 452-472 form a helical membrane-spanning segment; it reads IVVIAGIGILAIVLVIMATCV. The Cytoplasmic portion of the chain corresponds to 473 to 479; sequence YYRQAGP.

Belongs to the herpesviridae glycoprotein C family. Interacts with host complement component C3; this interaction inhibits host immune response by disregulating complement cascade.

It is found in the virion membrane. In terms of biological role, essential for the initial attachment to heparan sulfate moieties of the host cell surface proteoglycans. Plays also a role in host immune evasion by inhibiting the host complement cascade activation. The protein is Envelope glycoprotein C homolog (gC) of Suid herpesvirus 1 (strain Indiana-Funkhauser / Becker) (SuHV-1).